The sequence spans 461 residues: Bifunctional protein GlmU (461 aa).

The pyrophosphorylase stretch occupies residues 1–243 (MNATVPSAAP…EDELRGINSR (243 aa)). Residues 24-27 (LAAG), lysine 38, glutamine 86, 91-92 (GT), 112-114 (YGD), glycine 155, glutamate 169, asparagine 184, and asparagine 241 contribute to the UDP-N-acetyl-alpha-D-glucosamine site. Aspartate 114 is a binding site for Mg(2+). Asparagine 241 serves as a coordination point for Mg(2+). The tract at residues 244–264 (AELAEAEACVQRRLRAAALDG) is linker. The interval 265–461 (GATLVAPETV…AALRRKKEQG (197 aa)) is N-acetyltransferase. UDP-N-acetyl-alpha-D-glucosamine contacts are provided by arginine 330 and lysine 348. The active-site Proton acceptor is the histidine 360. 2 residues coordinate UDP-N-acetyl-alpha-D-glucosamine: tyrosine 363 and asparagine 374. Acetyl-CoA-binding positions include alanine 377, 383 to 384 (NY), serine 402, alanine 420, and arginine 437.

This sequence in the N-terminal section; belongs to the N-acetylglucosamine-1-phosphate uridyltransferase family. In the C-terminal section; belongs to the transferase hexapeptide repeat family. In terms of assembly, homotrimer. It depends on Mg(2+) as a cofactor.

The protein localises to the cytoplasm. The enzyme catalyses alpha-D-glucosamine 1-phosphate + acetyl-CoA = N-acetyl-alpha-D-glucosamine 1-phosphate + CoA + H(+). It carries out the reaction N-acetyl-alpha-D-glucosamine 1-phosphate + UTP + H(+) = UDP-N-acetyl-alpha-D-glucosamine + diphosphate. Its pathway is nucleotide-sugar biosynthesis; UDP-N-acetyl-alpha-D-glucosamine biosynthesis; N-acetyl-alpha-D-glucosamine 1-phosphate from alpha-D-glucosamine 6-phosphate (route II): step 2/2. It functions in the pathway nucleotide-sugar biosynthesis; UDP-N-acetyl-alpha-D-glucosamine biosynthesis; UDP-N-acetyl-alpha-D-glucosamine from N-acetyl-alpha-D-glucosamine 1-phosphate: step 1/1. The protein operates within bacterial outer membrane biogenesis; LPS lipid A biosynthesis. Functionally, catalyzes the last two sequential reactions in the de novo biosynthetic pathway for UDP-N-acetylglucosamine (UDP-GlcNAc). The C-terminal domain catalyzes the transfer of acetyl group from acetyl coenzyme A to glucosamine-1-phosphate (GlcN-1-P) to produce N-acetylglucosamine-1-phosphate (GlcNAc-1-P), which is converted into UDP-GlcNAc by the transfer of uridine 5-monophosphate (from uridine 5-triphosphate), a reaction catalyzed by the N-terminal domain. This chain is Bifunctional protein GlmU, found in Gluconacetobacter diazotrophicus (strain ATCC 49037 / DSM 5601 / CCUG 37298 / CIP 103539 / LMG 7603 / PAl5).